Here is a 218-residue protein sequence, read N- to C-terminus: uncharacterized protein (218 aa).

Helical transmembrane passes span 19 to 39 (VFGFSEFSIIGFITAVIFTII), 92 to 112 (FDYALFLTLVGIANIGIVSAV), 124 to 144 (YGLIAMIATLPLFGSAGMILA), 161 to 181 (LLFEKIIFAAGMAGETGIAPF), and 196 to 216 (YILMIHLSSLLLIVRTVEILL).

Its subcellular location is the cell membrane. This is an uncharacterized protein from Methanocaldococcus jannaschii (strain ATCC 43067 / DSM 2661 / JAL-1 / JCM 10045 / NBRC 100440) (Methanococcus jannaschii).